Here is a 255-residue protein sequence, read N- to C-terminus: MAVNQSHTENRRGVLIPNGESLLKQSLNVELSFPRQSEGSNVFNGTKTGTLFLTSYRVIFITSHSINGPMLSFMMPFDLITNLTVEQPVFAANFIKGTIQAAPYGGWEGQATFKLVFRNGGAIEFAQLMVKAASSVIAYGAPPAGYGAPPAGYGAPPPGYGAPPAGYGAPPPGYGAPPAGYGAQPAGNEGPPVGYRASPAGYGAPPLGYEAPPAGNEGLPAGYRASPAGSGARPHESAAAQAPENEASLPSASSS.

Residues 15–87 form the GRAM domain; that stretch reads LIPNGESLLK…DLITNLTVEQ (73 aa). 7 tandem repeats follow at residues 139-145, 146-152, 153-159, 160-166, 167-173, 174-180, and 202-208. A 6 X 7 AA tandem repeat of Y-G-X-P-P-X-G region spans residues 139–208; it reads YGAPPAGYGA…PAGYGAPPLG (70 aa). The PPxY motif signature appears at 171 to 174; it reads PPGY. Disordered regions lie at residues 180–199 and 204–255; these read GYGAQPAGNEGPPVGYRASP and APPL…ASSS.

Its function is as follows. May play a role in meiotic resumption and pronuclear formation, mediated by a WW domain-signaling pathway during fertilization. This is Postacrosomal sheath WW domain-binding protein (WBP2NL) from Macaca fascicularis (Crab-eating macaque).